The chain runs to 403 residues: Decapping and exoribonuclease protein 1 (403 aa).

Residue E223 coordinates a divalent metal cation. E260 is a binding site for substrate. D262, E273, and I274 together coordinate a divalent metal cation. Substrate is bound by residues K275 and Q297.

This sequence belongs to the DXO/Dom3Z family. A divalent metal cation serves as cofactor.

It localises to the cytoplasm. The catalysed reaction is a 5'-end NAD(+)-phospho-ribonucleoside in mRNA + H2O = a 5'-end phospho-ribonucleoside in mRNA + NAD(+) + H(+). It catalyses the reaction a 5'-end (N(7)-methyl 5'-triphosphoguanosine)-ribonucleoside-ribonucleotide in mRNA + H2O = a (N(7)-methyl 5'-triphosphoguanosine)-nucleoside + a 5'-end phospho-ribonucleoside in mRNA + H(+). Its function is as follows. Decapping enzyme for NAD-capped RNAs: specifically hydrolyzes the nicotinamide adenine dinucleotide (NAD) cap from a subset of RNAs by removing the entire NAD moiety from the 5'-end of an NAD-capped RNA. The NAD-cap is present at the 5'-end of some RNAs and snoRNAs. In contrast to the canonical 5'-end N7 methylguanosine (m7G) cap, the NAD cap promotes mRNA decay. Also acts as a non-canonical decapping enzyme that removes the entire cap structure of m7G capped or incompletely capped RNAs and mediates their subsequent degradation. Has decapping and 5'-3' exonuclease activities. Has decapping activity toward incomplete 5'-end cap mRNAs such as unmethylated 5'-end-capped RNA to release GpppN and 5'-end monophosphate RNA. The 5'-end monophosphate RNA is then degraded by the 5'-3' exoribonuclease activity, enabling this enzyme to decap and degrade incompletely capped mRNAs. This Kluyveromyces lactis (strain ATCC 8585 / CBS 2359 / DSM 70799 / NBRC 1267 / NRRL Y-1140 / WM37) (Yeast) protein is Decapping and exoribonuclease protein 1.